A 199-amino-acid polypeptide reads, in one-letter code: Recombination protein RecR (199 aa).

The C4-type zinc finger occupies 60–75 (CARCHTFTEGEVCSTC). The 96-residue stretch at 83–178 (SRLAVVETPA…HVTRLARGVP (96 aa)) folds into the Toprim domain.

It belongs to the RecR family.

In terms of biological role, may play a role in DNA repair. It seems to be involved in an RecBC-independent recombinational process of DNA repair. It may act with RecF and RecO. The polypeptide is Recombination protein RecR (Paracidovorax citrulli (strain AAC00-1) (Acidovorax citrulli)).